Reading from the N-terminus, the 393-residue chain is PxcA-like protein (393 aa).

4 consecutive transmembrane segments (helical) span residues 173 to 193 (FLIVLIFIPLTVQILTKNLVF), 271 to 291 (IVNLLADIAGLVAFVVLIIVF), 306 to 326 (FLALNDITKVFIFILLTDMFV), and 354 to 374 (VYIFIATVPVFLDSLFKLLIF).

Belongs to the CemA family. PxcL subfamily.

Its subcellular location is the cell inner membrane. Functionally, together with PxcA, contributes to transient H(+) uptake following dark to light transition. Required for H(+) influx to activate the Calvin-Benson-Bassham cycle. May also be involved in CO(2) transport. The chain is PxcA-like protein from Synechocystis sp. (strain ATCC 27184 / PCC 6803 / Kazusa).